Here is a 201-residue protein sequence, read N- to C-terminus: Large ribosomal subunit protein uL4 (201 aa).

The interval 39-70 (GRQGTKAQKTRSEVSGGGKKPWRQKGTGRARA) is disordered.

Belongs to the universal ribosomal protein uL4 family. In terms of assembly, part of the 50S ribosomal subunit.

Its function is as follows. One of the primary rRNA binding proteins, this protein initially binds near the 5'-end of the 23S rRNA. It is important during the early stages of 50S assembly. It makes multiple contacts with different domains of the 23S rRNA in the assembled 50S subunit and ribosome. Forms part of the polypeptide exit tunnel. The sequence is that of Large ribosomal subunit protein uL4 from Marinobacter nauticus (strain ATCC 700491 / DSM 11845 / VT8) (Marinobacter aquaeolei).